Here is a 476-residue protein sequence, read N- to C-terminus: Protein DETOXIFICATION 4 (476 aa).

A run of 12 helical transmembrane segments spans residues 35–55 (AVPMATVTIAQYLLPVISVMV), 66–86 (GVALATSFTNVSGFSIMFGLV), 117–137 (IPICVLISILWIYMEKLLISL), 154–174 (LIPTLFAHAIVLPLTRFLLAQ), 176–196 (LVLPLLYFALTTLLFHIAVCW), 208–228 (GAALAISVSFWFFAMTLSCYV), 260–280 (AAMLCLEWWLFELLILCSGLL), 289–309 (VLSICLTTATLHYVIPVGVAA), 332–352 (LAGLCLWLVESSFFSILLFAF), 370–390 (VADLSPLLCLSFVLDGFTAVL), 408–428 (VVAYYLVGAPVGIYLAFSCEL), and 433–453 (LWCGVVVGSAVQAIILAIVTA).

This sequence belongs to the multi antimicrobial extrusion (MATE) (TC 2.A.66.1) family.

Its subcellular location is the membrane. The sequence is that of Protein DETOXIFICATION 4 from Arabidopsis thaliana (Mouse-ear cress).